We begin with the raw amino-acid sequence, 565 residues long: Wee1-like protein kinase 2 (565 aa).

Residues 217-493 enclose the Protein kinase domain; sequence FLELERIGVG…TKHPILRPSL (277 aa). ATP-binding positions include 223–231 and Lys-246; that span reads IGVGEFGSV. Asp-344 acts as the Proton acceptor in catalysis. Mg(2+) contacts are provided by Asn-349 and Asp-383. A coiled-coil region spans residues 496–522; it reads AVQLQKQLNVEKCKTAMLERELKAARL. The segment at 531-553 is disordered; it reads PLGNANLQESETSPKKNNKRLVG.

Belongs to the protein kinase superfamily. Ser/Thr protein kinase family. WEE1 subfamily.

The protein resides in the nucleus. It carries out the reaction L-tyrosyl-[protein] + ATP = O-phospho-L-tyrosyl-[protein] + ADP + H(+). Functionally, oocyte-specific protein tyrosine kinase that phosphorylates and inhibits CDK1 and acts as a key regulator of meiosis. Required to maintain meiotic arrest in oocytes by phosphorylating CDK1 at 'Tyr-15', leading to inhibit CDK1 activity and prevent meiotic reentry. This chain is Wee1-like protein kinase 2 (WEE2), found in Gallus gallus (Chicken).